The following is a 319-amino-acid chain: MKTRIVSSVTTTLLLGSILMNPVAGAADSDINIKTGTTDIGSNTTVKTGDLVTYDKENGMHKKVFYSFIDDKNHNKKLLVIRTKGTIAGQYRVYSEEGANKSGLAWPSAFKVQLQLPDNEVAQISDYYPRNSIDTKEYMSTLTYGFNGNVTGDDTGKIGGLIGANVSIGHTLKYVQPDFKTILESPTDKKVGWKVIFNNMVNQNWGPYDRDSWNPVYGNQLFMKTRNGSMKAADNFLDPNKASSLLSSGFSPDFATVITMDRKASKQQTNIDVIYERVRDDYQLHWTSTNWKGTNTKDKWTDRSSERYKIDWEKEEMTN.

Positions 1–26 (MKTRIVSSVTTTLLLGSILMNPVAGA) are cleaved as a signal peptide.

This sequence belongs to the aerolysin family. As to quaternary structure, self-assembles to first form a non-lytic oligomeric intermediate, and then, a mushroom-shaped homoheptamer structure of 100 Angstroms in length and up to 100 Angstroms in diameter. Interacts with human ADAM10; this interaction is required for toxin pore formation, disruption of focal adhesions, and hly-mediated cytotoxicity.

The protein resides in the secreted. In terms of biological role, alpha-toxin binds to the membrane of eukaryotic cells (particularly red blood cells, RBC) forming pores, resulting in hemolysis, with the release of low-molecular weight molecules leading to eventual osmotic RBC lysis. Human RBCs bind much less alpha-toxin than do rabbit RBCs. Heptamer oligomerization and pore formation is required for lytic activity. The chain is Alpha-hemolysin (hly) from Staphylococcus aureus.